A 525-amino-acid polypeptide reads, in one-letter code: Bifunctional purine biosynthesis protein PurH (525 aa).

The MGS-like domain occupies 1–148 (MPSNNLIKNA…KNYKNVIVIV (148 aa)).

Belongs to the PurH family.

The enzyme catalyses (6R)-10-formyltetrahydrofolate + 5-amino-1-(5-phospho-beta-D-ribosyl)imidazole-4-carboxamide = 5-formamido-1-(5-phospho-D-ribosyl)imidazole-4-carboxamide + (6S)-5,6,7,8-tetrahydrofolate. The catalysed reaction is IMP + H2O = 5-formamido-1-(5-phospho-D-ribosyl)imidazole-4-carboxamide. The protein operates within purine metabolism; IMP biosynthesis via de novo pathway; 5-formamido-1-(5-phospho-D-ribosyl)imidazole-4-carboxamide from 5-amino-1-(5-phospho-D-ribosyl)imidazole-4-carboxamide (10-formyl THF route): step 1/1. It participates in purine metabolism; IMP biosynthesis via de novo pathway; IMP from 5-formamido-1-(5-phospho-D-ribosyl)imidazole-4-carboxamide: step 1/1. This Buchnera aphidicola subsp. Acyrthosiphon pisum (strain 5A) protein is Bifunctional purine biosynthesis protein PurH.